The sequence spans 63 residues: Conotoxin Cal12.5 (63 aa).

The first 21 residues, 1–21 (MKVTCVLVVLLLLLPYGDLLG), serve as a signal peptide directing secretion.

It belongs to the conotoxin O1 superfamily. In terms of processing, contains 4 disulfide bonds. In terms of tissue distribution, expressed by the venom duct.

It localises to the secreted. In terms of biological role, probable neurotoxin. This chain is Conotoxin Cal12.5, found in Californiconus californicus (California cone).